A 1216-amino-acid polypeptide reads, in one-letter code: SPOC domain-containing protein 1 (1216 aa).

Disordered regions lie at residues 1–74, 166–216, 236–325, 348–462, and 511–601; these read MSQA…RAAG, EARD…GAHS, NLLS…PPQS, RTGS…PRLE, and SSPS…QQEK. The segment covering 36 to 50 has biased composition (low complexity); it reads PGLSPDGPGASSGPG. Residues 177-190 are compositionally biased toward basic and acidic residues; the sequence is CDRRSPTLSKEEPP. Over residues 204–213 the composition is skewed to basic residues; that stretch reads RVRKKWRRQG. Residues 266–278 are compositionally biased toward gly residues; it reads SGPGEPGGSGAGC. Low complexity predominate over residues 314 to 325; it reads SLSSAAQAPPQS. A compositionally biased stretch (basic and acidic residues) spans 436–452; that stretch reads RGTDRSSDNSHQDRPEE. The segment covering 581 to 592 has biased composition (acidic residues); the sequence is EAEEDSLPEQPE. One can recognise a TFIIS central domain in the interval 608 to 728; that stretch reads VRGTVVRSMQ…IIEQQQKEPC (121 aa). A disordered region spans residues 823-850; sequence QTPMPAPEMPKTRELSPTEPQDRVPPSG. Basic and acidic residues predominate over residues 832–844; the sequence is PKTRELSPTEPQD. The 104-residue stretch at 867 to 970 folds into the SPOC domain; sequence WEGVLDMFSI…VEHMGMVLLP (104 aa). The segment covering 1046–1055 has biased composition (basic and acidic residues); the sequence is RYYQPDDRRP. 2 disordered regions span residues 1046-1140 and 1176-1216; these read RYYQ…QHFH and PRPL…PRKA.

In terms of assembly, interacts with DNMT3A, DNMT3C and DNMT3L. Interacts with C19orf84. Interacts with SPIN1; promoting recruitment to transposons marked with histone H3 trimethylated at both 'Lys-4' and 'Lys-9' (H3K4me3K9me3).

Its subcellular location is the nucleus. The protein resides in the chromosome. Functionally, protein adapter that acts as an essential executor of PIWIL4-piRNA pathway directed transposon DNA methylation and silencing in the male embryonic germ cells. Recruited to young transposons, which are specifically marked with histone H3 trimethylated at both 'Lys-4' and 'Lys-9' (H3K4me3K9me3), via its association with SPIN1 chromatin reader, and associates with the de novo DNA methylation machinery and repressive chromatin remodeling complexes. Following this, PIWIL4 engages with nascent transposable element transcript to direct piRNA-directed DNA methylation. Not required for piRNA biosynthesis. The sequence is that of SPOC domain-containing protein 1 from Homo sapiens (Human).